The chain runs to 153 residues: MDSGTKVKKGAAGRRSGGGPKKKPVSRSVKSGLQFPVGRIGRYLKKGRYSKRVGTGAPVYLAAVLEYLAAEVLELAGNAARDNKKNRIIPRHVLLAVRNDEELGTLLKGVTIAHGGVLPNINPILLPKKSEKAASTTKTPKSPSKATKSPKKS.

Positions 1-12 (MDSGTKVKKGAA) are enriched in basic residues. Disordered stretches follow at residues 1–30 (MDSGTKVKKGAAGRRSGGGPKKKPVSRSVK) and 129–153 (KSEKAASTTKTPKSPSKATKSPKKS). Residues 133-147 (AASTTKTPKSPSKAT) are compositionally biased toward low complexity. The SPKK motif motif lies at 149–152 (SPKK).

This sequence belongs to the histone H2A family. The nucleosome is a histone octamer containing two molecules each of H2A, H2B, H3 and H4 assembled in one H3-H4 heterotetramer and two H2A-H2B heterodimers. The octamer wraps approximately 147 bp of DNA. Post-translationally, not ubiquitinated.

It localises to the nucleus. It is found in the chromosome. Its function is as follows. Core component of nucleosome. Nucleosomes wrap and compact DNA into chromatin, limiting DNA accessibility to the cellular machineries which require DNA as a template. Histones thereby play a central role in transcription regulation, DNA repair, DNA replication and chromosomal stability. DNA accessibility is regulated via a complex set of post-translational modifications of histones, also called histone code, and nucleosome remodeling. In Arabidopsis thaliana (Mouse-ear cress), this protein is Probable histone H2A.4.